We begin with the raw amino-acid sequence, 471 residues long: UDP-N-acetylmuramoylalanine--D-glutamate ligase (471 aa).

An ATP-binding site is contributed by 127-133 (GSNGKST).

The protein belongs to the MurCDEF family.

Its subcellular location is the cytoplasm. The catalysed reaction is UDP-N-acetyl-alpha-D-muramoyl-L-alanine + D-glutamate + ATP = UDP-N-acetyl-alpha-D-muramoyl-L-alanyl-D-glutamate + ADP + phosphate + H(+). It functions in the pathway cell wall biogenesis; peptidoglycan biosynthesis. Functionally, cell wall formation. Catalyzes the addition of glutamate to the nucleotide precursor UDP-N-acetylmuramoyl-L-alanine (UMA). This chain is UDP-N-acetylmuramoylalanine--D-glutamate ligase, found in Colwellia psychrerythraea (strain 34H / ATCC BAA-681) (Vibrio psychroerythus).